Consider the following 151-residue polypeptide: Aspartate carbamoyltransferase regulatory chain (151 aa).

Zn(2+) is bound by residues Cys108, Cys113, Cys138, and Cys141.

The protein belongs to the PyrI family. As to quaternary structure, contains catalytic and regulatory chains. Zn(2+) serves as cofactor.

In terms of biological role, involved in allosteric regulation of aspartate carbamoyltransferase. In Pyrobaculum islandicum (strain DSM 4184 / JCM 9189 / GEO3), this protein is Aspartate carbamoyltransferase regulatory chain.